Consider the following 253-residue polypeptide: Acidic 26 kDa endochitinase (253 aa).

Residues 1-24 (MKFNIVSPVALSCLFFLFLTGTLA) form the signal peptide. Residue glutamate 92 is the Proton donor of the active site. Residues cysteine 212 and cysteine 244 are joined by a disulfide bond.

It belongs to the glycosyl hydrolase 19 family. Chitinase class II subfamily.

Its subcellular location is the secreted. The protein localises to the extracellular space. The enzyme catalyses Random endo-hydrolysis of N-acetyl-beta-D-glucosaminide (1-&gt;4)-beta-linkages in chitin and chitodextrins.. Defense against chitin-containing fungal pathogens. The protein is Acidic 26 kDa endochitinase (CHI3) of Solanum lycopersicum (Tomato).